The following is a 123-amino-acid chain: Ribonuclease P protein component (123 aa).

It belongs to the RnpA family. In terms of assembly, consists of a catalytic RNA component (M1 or rnpB) and a protein subunit.

It carries out the reaction Endonucleolytic cleavage of RNA, removing 5'-extranucleotides from tRNA precursor.. Its function is as follows. RNaseP catalyzes the removal of the 5'-leader sequence from pre-tRNA to produce the mature 5'-terminus. It can also cleave other RNA substrates such as 4.5S RNA. The protein component plays an auxiliary but essential role in vivo by binding to the 5'-leader sequence and broadening the substrate specificity of the ribozyme. In Streptomyces avermitilis (strain ATCC 31267 / DSM 46492 / JCM 5070 / NBRC 14893 / NCIMB 12804 / NRRL 8165 / MA-4680), this protein is Ribonuclease P protein component.